The sequence spans 105 residues: Small ribosomal subunit protein uS10 (105 aa).

Belongs to the universal ribosomal protein uS10 family. As to quaternary structure, part of the 30S ribosomal subunit.

Involved in the binding of tRNA to the ribosomes. The sequence is that of Small ribosomal subunit protein uS10 from Synechococcus sp. (strain JA-2-3B'a(2-13)) (Cyanobacteria bacterium Yellowstone B-Prime).